The following is a 332-amino-acid chain: NADH-quinone oxidoreductase subunit H (332 aa).

The next 9 membrane-spanning stretches (helical) occupy residues 4 to 24 (FAFFALEALIKCIIIIAIFAS), 44 to 64 (IGPDMVGPFGLIQLVADMIKL), 78 to 98 (FIFAIAPLISAICAFVSLAAI), 120 to 140 (VALLFVIGTSGLCFYAVFLGG), 165 to 185 (VGALALIAIVMLVGSFSLVDI), 194 to 214 (FSWLIFKQPLAFVLFIIALFI), 255 to 275 (IAGAILVTLLFLGGFNGFWII), 279 to 299 (IMMIVKSSFIFFWYFWARAAF), and 312 to 332 (YLILIPLAVVNLLITALAVLL).

It belongs to the complex I subunit 1 family. In terms of assembly, NDH-1 is composed of 14 different subunits. Subunits NuoA, H, J, K, L, M, N constitute the membrane sector of the complex.

Its subcellular location is the cell inner membrane. It carries out the reaction a quinone + NADH + 5 H(+)(in) = a quinol + NAD(+) + 4 H(+)(out). Functionally, NDH-1 shuttles electrons from NADH, via FMN and iron-sulfur (Fe-S) centers, to quinones in the respiratory chain. The immediate electron acceptor for the enzyme in this species is believed to be ubiquinone. Couples the redox reaction to proton translocation (for every two electrons transferred, four hydrogen ions are translocated across the cytoplasmic membrane), and thus conserves the redox energy in a proton gradient. This subunit may bind ubiquinone. In Campylobacter jejuni subsp. doylei (strain ATCC BAA-1458 / RM4099 / 269.97), this protein is NADH-quinone oxidoreductase subunit H.